The chain runs to 486 residues: Cardiolipin synthase A (486 aa).

Helical transmembrane passes span 3-23 (TFYT…IAGV) and 38-58 (MAWL…YLSF). PLD phosphodiesterase domains follow at residues 219–246 (MDLR…VDPR) and 399–426 (EGGL…DMRS). Residues His224, Lys226, Asp231, His404, Lys406, and Asp411 contribute to the active site.

It belongs to the phospholipase D family. Cardiolipin synthase subfamily. ClsA sub-subfamily.

It localises to the cell inner membrane. It catalyses the reaction 2 a 1,2-diacyl-sn-glycero-3-phospho-(1'-sn-glycerol) = a cardiolipin + glycerol. Catalyzes the reversible phosphatidyl group transfer from one phosphatidylglycerol molecule to another to form cardiolipin (CL) (diphosphatidylglycerol) and glycerol. This is Cardiolipin synthase A from Citrobacter koseri (strain ATCC BAA-895 / CDC 4225-83 / SGSC4696).